Consider the following 106-residue polypeptide: Small ribosomal subunit protein uS10 (106 aa).

This sequence belongs to the universal ribosomal protein uS10 family. As to quaternary structure, part of the 30S ribosomal subunit.

Involved in the binding of tRNA to the ribosomes. The sequence is that of Small ribosomal subunit protein uS10 from Parasynechococcus marenigrum (strain WH8102).